The sequence spans 44 residues: Photosystem I reaction center subunit IX (44 aa).

Residues 7–27 (YLSVAPVLSTLWFGALAGLLI) traverse the membrane as a helical segment.

Belongs to the PsaJ family.

The protein localises to the plastid. It localises to the chloroplast thylakoid membrane. In terms of biological role, may help in the organization of the PsaE and PsaF subunits. The polypeptide is Photosystem I reaction center subunit IX (Eucalyptus globulus subsp. globulus (Tasmanian blue gum)).